A 139-amino-acid chain; its full sequence is MAQAAKKQNLGTGRRKTSSARVFLRSGTGQIIINGLPLDEYFGRETARMVVRQPLVKLDVQSRFDVYATVQGGGDSGQAGAIRHGITRALIQYDEEGGEGGTWRSTLRKAGFVTRDPRMVERKKVGLHGARRGTQFSKR.

The protein belongs to the universal ribosomal protein uS9 family.

This is Small ribosomal subunit protein uS9 from Coxiella burnetii (strain CbuG_Q212) (Coxiella burnetii (strain Q212)).